A 72-amino-acid chain; its full sequence is Translation initiation factor IF-1 (72 aa).

The S1-like domain maps to 1–72 (MPKDDSIEVE…TRGRITYRAK (72 aa)).

Belongs to the IF-1 family. As to quaternary structure, component of the 30S ribosomal translation pre-initiation complex which assembles on the 30S ribosome in the order IF-2 and IF-3, IF-1 and N-formylmethionyl-tRNA(fMet); mRNA recruitment can occur at any time during PIC assembly.

It localises to the cytoplasm. Functionally, one of the essential components for the initiation of protein synthesis. Stabilizes the binding of IF-2 and IF-3 on the 30S subunit to which N-formylmethionyl-tRNA(fMet) subsequently binds. Helps modulate mRNA selection, yielding the 30S pre-initiation complex (PIC). Upon addition of the 50S ribosomal subunit IF-1, IF-2 and IF-3 are released leaving the mature 70S translation initiation complex. The polypeptide is Translation initiation factor IF-1 (Myxococcus xanthus (strain DK1622)).